A 533-amino-acid polypeptide reads, in one-letter code: CTP synthase (533 aa).

Residues 1–269 (MKKNLKILVI…HEILSSKLNI (269 aa)) form an amidoligase domain region. Serine 16 contributes to the CTP binding site. Serine 16 is a binding site for UTP. Residues 17–22 (GIGKGV) and aspartate 73 each bind ATP. 2 residues coordinate Mg(2+): aspartate 73 and glutamate 143. Residues 150 to 152 (DME), 190 to 195 (KSKPTQ), and lysine 226 each bind CTP. UTP-binding positions include 190 to 195 (KSKPTQ) and lysine 226. In terms of domain architecture, Glutamine amidotransferase type-1 spans 304–533 (YAELDDSYAS…LFLGLIKACI (230 aa)). Glycine 355 is a binding site for L-glutamine. The Nucleophile; for glutamine hydrolysis role is filled by cysteine 382. L-glutamine contacts are provided by residues 383–386 (LGLQ), glutamate 406, and arginine 466. Active-site residues include histidine 511 and glutamate 513.

Belongs to the CTP synthase family. Homotetramer.

It catalyses the reaction UTP + L-glutamine + ATP + H2O = CTP + L-glutamate + ADP + phosphate + 2 H(+). The catalysed reaction is L-glutamine + H2O = L-glutamate + NH4(+). The enzyme catalyses UTP + NH4(+) + ATP = CTP + ADP + phosphate + 2 H(+). Its pathway is pyrimidine metabolism; CTP biosynthesis via de novo pathway; CTP from UDP: step 2/2. With respect to regulation, allosterically activated by GTP, when glutamine is the substrate; GTP has no effect on the reaction when ammonia is the substrate. The allosteric effector GTP functions by stabilizing the protein conformation that binds the tetrahedral intermediate(s) formed during glutamine hydrolysis. Inhibited by the product CTP, via allosteric rather than competitive inhibition. Catalyzes the ATP-dependent amination of UTP to CTP with either L-glutamine or ammonia as the source of nitrogen. Regulates intracellular CTP levels through interactions with the four ribonucleotide triphosphates. In Borreliella afzelii (strain PKo) (Borrelia afzelii), this protein is CTP synthase.